A 324-amino-acid polypeptide reads, in one-letter code: Pseudouridylate synthase RPUSD4, mitochondrial (324 aa).

The N-terminal 11 residues, 1–11 (MAAAGGGATRG), are a transit peptide targeting the mitochondrion. Asp-105 is a catalytic residue.

It belongs to the pseudouridine synthase RluA family.

The protein localises to the mitochondrion matrix. The protein resides in the nucleus. It localises to the cytoplasm. The catalysed reaction is uridine in 5S rRNA = pseudouridine in 5S rRNA. It carries out the reaction a uridine in tRNA = a pseudouridine in tRNA. The enzyme catalyses a uridine in mRNA = a pseudouridine in mRNA. Its function is as follows. Catalyzes uridine to pseudouridine isomerization (pseudouridylation) of different mitochondrial RNA substrates. Acts on position 1397 in 16S mitochondrial ribosomal RNA (16S mt-rRNA). This modification is required for the assembly of 16S mt-rRNA into a functional mitochondrial ribosome. Acts on position 39 in mitochondrial tRNA(Phe). Also catalyzes pseudouridylation of mRNAs in nucleus: acts as a regulator of pre-mRNA splicing by mediating pseudouridylation of pre-mRNAs at locations associated with alternatively spliced regions. Pseudouridylation of pre-mRNAs near splice sites directly regulates mRNA splicing and mRNA 3'-end processing. This is Pseudouridylate synthase RPUSD4, mitochondrial from Xenopus tropicalis (Western clawed frog).